The following is a 133-amino-acid chain: Large-conductance mechanosensitive channel (133 aa).

2 consecutive transmembrane segments (helical) span residues 10–30 (FAMK…TAFG) and 76–96 (GNFI…FCVI).

It belongs to the MscL family. In terms of assembly, homopentamer.

The protein localises to the cell inner membrane. Functionally, channel that opens in response to stretch forces in the membrane lipid bilayer. May participate in the regulation of osmotic pressure changes within the cell. The polypeptide is Large-conductance mechanosensitive channel (Campylobacter curvus (strain 525.92)).